The chain runs to 149 residues: UPF0756 membrane protein BBR47_12340 (149 aa).

4 helical membrane-spanning segments follow: residues 6-26 (IILL…LVYA), 48-68 (PMFH…IAKG), 86-106 (IAIL…SILP), and 120-140 (LLAV…AGCI).

Belongs to the UPF0756 family.

It is found in the cell membrane. This chain is UPF0756 membrane protein BBR47_12340, found in Brevibacillus brevis (strain 47 / JCM 6285 / NBRC 100599).